A 610-amino-acid polypeptide reads, in one-letter code: UvrABC system protein C (610 aa).

In terms of domain architecture, GIY-YIG spans 16–94 (SQPGVYRMYD…IKLYQPRYNV (79 aa)). One can recognise a UVR domain in the interval 204–239 (DQVLTQLISRMETASQNLEFEEAARIRDQIQAVRRV).

This sequence belongs to the UvrC family. Interacts with UvrB in an incision complex.

It localises to the cytoplasm. Functionally, the UvrABC repair system catalyzes the recognition and processing of DNA lesions. UvrC both incises the 5' and 3' sides of the lesion. The N-terminal half is responsible for the 3' incision and the C-terminal half is responsible for the 5' incision. This Escherichia coli O139:H28 (strain E24377A / ETEC) protein is UvrABC system protein C.